A 297-amino-acid polypeptide reads, in one-letter code: Protoheme IX farnesyltransferase (297 aa).

The next 9 membrane-spanning stretches (helical) occupy residues 26–46 (VTQLAVFCAVIGMFLATPGMV), 48–68 (YPVLFGGIAGIWLLAGAAFAV), 96–116 (FHIIIFSIILGSLGMIILWNF), 120–140 (LTMWLTLATFVGYAVIYTWLL), 147–167 (NIVIGGLSGAMPPALGWAAVT), 174–194 (AWLLVLIIFVWTPPHFWALAL), 218–238 (LLNILLYTLILIAATLLPYIY), 243–263 (IIYLISAIVLGLMFLAYVIAL), and 276–296 (FRFSITYLSLLFAALLIDHYF).

The protein belongs to the UbiA prenyltransferase family. Protoheme IX farnesyltransferase subfamily.

The protein localises to the cell membrane. The enzyme catalyses heme b + (2E,6E)-farnesyl diphosphate + H2O = Fe(II)-heme o + diphosphate. It participates in porphyrin-containing compound metabolism; heme O biosynthesis; heme O from protoheme: step 1/1. Converts heme B (protoheme IX) to heme O by substitution of the vinyl group on carbon 2 of heme B porphyrin ring with a hydroxyethyl farnesyl side group. The chain is Protoheme IX farnesyltransferase from Polynucleobacter asymbioticus (strain DSM 18221 / CIP 109841 / QLW-P1DMWA-1) (Polynucleobacter necessarius subsp. asymbioticus).